Here is a 1825-residue protein sequence, read N- to C-terminus: Tail fiber protein (1825 aa).

4 coiled-coil regions span residues 393 to 466 (VDMS…NSLE), 681 to 701 (DGVQSNKAQIEIQAEQISQKV), 843 to 891 (KGDQ…NMLA), and 975 to 998 (DVAKNVADKAQETADTINDNLQNI).

It localises to the virion. In terms of biological role, structural protein, a component of a tail fiber. The sequence is that of Tail fiber protein from Enterococcus faecalis (Streptococcus faecalis).